The primary structure comprises 187 residues: Elongation factor P (187 aa).

The protein belongs to the elongation factor P family.

It localises to the cytoplasm. Its pathway is protein biosynthesis; polypeptide chain elongation. Involved in peptide bond synthesis. Stimulates efficient translation and peptide-bond synthesis on native or reconstituted 70S ribosomes in vitro. Probably functions indirectly by altering the affinity of the ribosome for aminoacyl-tRNA, thus increasing their reactivity as acceptors for peptidyl transferase. The sequence is that of Elongation factor P from Synechococcus sp. (strain WH7803).